The primary structure comprises 238 residues: Peptidyl-tRNA hydrolase (238 aa).

Tyr14 contacts tRNA. The active-site Proton acceptor is the His19. Residues Tyr64, Asn66, and Asn112 each coordinate tRNA. Residues 202 to 225 (PAAQSHIHQARNSAQPKKLPETGP) form a disordered region. The span at 207 to 216 (HIHQARNSAQ) shows a compositional bias: polar residues.

This sequence belongs to the PTH family. In terms of assembly, monomer.

It is found in the cytoplasm. It carries out the reaction an N-acyl-L-alpha-aminoacyl-tRNA + H2O = an N-acyl-L-amino acid + a tRNA + H(+). Its function is as follows. Hydrolyzes ribosome-free peptidyl-tRNAs (with 1 or more amino acids incorporated), which drop off the ribosome during protein synthesis, or as a result of ribosome stalling. Functionally, catalyzes the release of premature peptidyl moieties from peptidyl-tRNA molecules trapped in stalled 50S ribosomal subunits, and thus maintains levels of free tRNAs and 50S ribosomes. The protein is Peptidyl-tRNA hydrolase of Agrobacterium fabrum (strain C58 / ATCC 33970) (Agrobacterium tumefaciens (strain C58)).